Here is a 199-residue protein sequence, read N- to C-terminus: Fe/S biogenesis protein NfuA (199 aa).

Residues Cys151 and Cys154 each contribute to the [4Fe-4S] cluster site.

It belongs to the NfuA family. Homodimer. [4Fe-4S] cluster serves as cofactor.

Functionally, involved in iron-sulfur cluster biogenesis. Binds a 4Fe-4S cluster, can transfer this cluster to apoproteins, and thereby intervenes in the maturation of Fe/S proteins. Could also act as a scaffold/chaperone for damaged Fe/S proteins. This Xanthomonas oryzae pv. oryzae (strain MAFF 311018) protein is Fe/S biogenesis protein NfuA.